The following is a 120-amino-acid chain: Large ribosomal subunit protein uL18 (120 aa).

This sequence belongs to the universal ribosomal protein uL18 family. As to quaternary structure, part of the 50S ribosomal subunit; part of the 5S rRNA/L5/L18/L25 subcomplex. Contacts the 5S and 23S rRNAs.

Functionally, this is one of the proteins that bind and probably mediate the attachment of the 5S RNA into the large ribosomal subunit, where it forms part of the central protuberance. The polypeptide is Large ribosomal subunit protein uL18 (Bartonella tribocorum (strain CIP 105476 / IBS 506)).